Here is a 197-residue protein sequence, read N- to C-terminus: NADH-quinone oxidoreductase subunit C (197 aa).

This sequence belongs to the complex I 30 kDa subunit family. In terms of assembly, NDH-1 is composed of 14 different subunits. Subunits NuoB, C, D, E, F, and G constitute the peripheral sector of the complex.

The protein resides in the cell inner membrane. It carries out the reaction a quinone + NADH + 5 H(+)(in) = a quinol + NAD(+) + 4 H(+)(out). Functionally, NDH-1 shuttles electrons from NADH, via FMN and iron-sulfur (Fe-S) centers, to quinones in the respiratory chain. The immediate electron acceptor for the enzyme in this species is believed to be ubiquinone. Couples the redox reaction to proton translocation (for every two electrons transferred, four hydrogen ions are translocated across the cytoplasmic membrane), and thus conserves the redox energy in a proton gradient. This chain is NADH-quinone oxidoreductase subunit C, found in Rickettsia prowazekii (strain Madrid E).